The chain runs to 177 residues: Large ribosomal subunit protein uL5c (177 aa).

It belongs to the universal ribosomal protein uL5 family. As to quaternary structure, part of the 50S ribosomal subunit; contacts the 5S rRNA.

Its subcellular location is the plastid. The protein localises to the chloroplast. Binds 5S rRNA, forms part of the central protuberance of the 50S subunit. This Cyanidioschyzon merolae (strain NIES-3377 / 10D) (Unicellular red alga) protein is Large ribosomal subunit protein uL5c (rpl5).